We begin with the raw amino-acid sequence, 156 residues long: Putative pre-16S rRNA nuclease (156 aa).

This sequence belongs to the YqgF nuclease family.

Its subcellular location is the cytoplasm. Its function is as follows. Could be a nuclease involved in processing of the 5'-end of pre-16S rRNA. The polypeptide is Putative pre-16S rRNA nuclease (Aromatoleum aromaticum (strain DSM 19018 / LMG 30748 / EbN1) (Azoarcus sp. (strain EbN1))).